A 363-amino-acid chain; its full sequence is Fructose-bisphosphate aldolase C (363 aa).

A Phosphotyrosine modification is found at Y5. Residues S36, S39, and S45 each carry the phosphoserine modification. R56 contacts substrate. K111 carries the post-translational modification N6-acetyllysine. K147 is a substrate binding site. E188 (proton acceptor) is an active-site residue. K230 (schiff-base intermediate with dihydroxyacetone-P) is an active-site residue.

Belongs to the class I fructose-bisphosphate aldolase family. In terms of assembly, homotetramer. Interacts with ATP6V1E1. In terms of tissue distribution, high expression in the adult brain.

The enzyme catalyses beta-D-fructose 1,6-bisphosphate = D-glyceraldehyde 3-phosphate + dihydroxyacetone phosphate. It participates in carbohydrate degradation; glycolysis; D-glyceraldehyde 3-phosphate and glycerone phosphate from D-glucose: step 4/4. This is Fructose-bisphosphate aldolase C (Aldoc) from Rattus norvegicus (Rat).